The sequence spans 227 residues: Chaperone protein FocC (227 aa).

The first 21 residues, 1–21, serve as a signal peptide directing secretion; that stretch reads MRIWAVLASFLVFFYIPQSYA.

The protein belongs to the periplasmic pilus chaperone family.

Its subcellular location is the periplasm. In terms of biological role, involved in the biogenesis of the F1C fimbriae. The polypeptide is Chaperone protein FocC (focC) (Escherichia coli O6:H1 (strain CFT073 / ATCC 700928 / UPEC)).